The chain runs to 1088 residues: Pathogenesis-related homeodomain protein (1088 aa).

8 repeat units span residues 140-152 (INMG…PEEV), 173-199 (NSYQ…RSDD), 205-239 (GLVE…KVQT), 240-274 (GLEQ…KVQN), 283-295 (INME…PEQV), 316-342 (NSDQ…QSDD), 348-382 (GFKE…KVQT), and 383-417 (GLEQ…KVQD). The tract at residues 140-295 (INMGQKETMP…EQKETIPEQV (156 aa)) is 2 X 13 AA repeats. Residues 173-342 (NSYQSGLPPE…HAQFGHQSDD (170 aa)) form a 2 X 27 AA approximate repeats region. The 2 X 35 AA approximate tandem repeats (type C) stretch occupies residues 205–274 (GLVELVIGQK…SRGRPRKVQN (70 aa)). The interval 220–282 (PSQLVETGKR…QNSPTSFLEN (63 aa)) is disordered. 2 DNA-binding regions (a.T hook) span residues 226-236 (TGKRGRGRPRK) and 261-271 (TGKRSRGRPRK). Positions 272 to 282 (VQNSPTSFLEN) are enriched in polar residues. Residues 303-320 (SLTIPTDNQSRTYNSDQS) show a composition bias toward polar residues. 2 disordered regions span residues 303-343 (SLTI…SDDT) and 363-484 (PSQL…RMEE). The segment at 348–417 (GFKELVIGQE…SRGRPRKVQD (70 aa)) is 2 X 35 AA approximate tandem repeats (type C). 2 DNA-binding regions (a.T hook) span residues 369–379 (AGKRGRGRPRK) and 404–414 (TGKRSRGRPRK). Residues 578–635 (DIFCAKCGSKDVTLSNDIILCDGACDRGFHQFCLDPPLLKEYIPPDDEGWLCPGCECK) form a PHD-type zinc finger. Disordered regions lie at residues 667–810 (AASG…PLYP) and 851–901 (EEYG…ARES). A 4-1 repeat occupies 678-693 (GLPSDDSEDDDYDPGG). Residues 678–744 (GLPSDDSEDD…SEDDEYDPSG (67 aa)) are 2 X 16 AA Asp/Glu-rich (acidic) repeats. Acidic residues predominate over residues 705-718 (SSTDESDYQSESDD). Residues 729 to 744 (GLPSDDSEDDEYDPSG) form a 4-2 repeat. 2 stretches are compositionally biased toward basic and acidic residues: residues 788–802 (DHVR…HPEQ) and 874–901 (NNSD…ARES). Positions 935–994 (KSTSKTLHGEHATQRLLQSFKENQYPQRAVKESLAAELALSVRQVSNWFNNRRWSFRHSS) form a DNA-binding region, homeobox.

Belongs to the PHD-associated homeobox family.

It is found in the nucleus. Functionally, specifically binds to the fungal elicitor-responsive DNA element, 5'-CTAATTGTTTA-3', of the gene PR2 promoter. The polypeptide is Pathogenesis-related homeodomain protein (PRH) (Petroselinum crispum (Parsley)).